The sequence spans 124 residues: uncharacterized protein (124 aa).

Residues 83–100 form a helical membrane-spanning segment; sequence VTCFSLYTICYRIVLIWA.

The protein localises to the membrane. This is an uncharacterized protein from Saccharomyces cerevisiae (strain ATCC 204508 / S288c) (Baker's yeast).